Consider the following 417-residue polypeptide: Spermidine/putrescine import ATP-binding protein PotA (417 aa).

One can recognise an ABC transporter domain in the interval 5–308; it reads IILKDLTKVF…PANRFVAQFV (304 aa). 37–44 contacts ATP; the sequence is GPSGCGKT. The tract at residues 105-177 is insert; the sequence is DFNSKIKANL…TALKCKKINK (73 aa).

The protein belongs to the ABC transporter superfamily. Spermidine/putrescine importer (TC 3.A.1.11.1) family. In terms of assembly, the complex is composed of two ATP-binding proteins (PotA), two transmembrane proteins (PotB and PotC) and a solute-binding protein (PotD).

It localises to the cell membrane. It catalyses the reaction ATP + H2O + polyamine-[polyamine-binding protein]Side 1 = ADP + phosphate + polyamineSide 2 + [polyamine-binding protein]Side 1.. In terms of biological role, part of the ABC transporter complex PotABCD involved in spermidine/putrescine import. Responsible for energy coupling to the transport system. The polypeptide is Spermidine/putrescine import ATP-binding protein PotA (Onion yellows phytoplasma (strain OY-M)).